The primary structure comprises 496 residues: Probable cytosol aminopeptidase (496 aa).

The Mn(2+) site is built by lysine 252 and aspartate 257. The active site involves lysine 264. 3 residues coordinate Mn(2+): aspartate 275, aspartate 334, and glutamate 336. The active site involves arginine 338.

It belongs to the peptidase M17 family. The cofactor is Mn(2+).

The protein localises to the cytoplasm. It carries out the reaction Release of an N-terminal amino acid, Xaa-|-Yaa-, in which Xaa is preferably Leu, but may be other amino acids including Pro although not Arg or Lys, and Yaa may be Pro. Amino acid amides and methyl esters are also readily hydrolyzed, but rates on arylamides are exceedingly low.. It catalyses the reaction Release of an N-terminal amino acid, preferentially leucine, but not glutamic or aspartic acids.. Its function is as follows. Presumably involved in the processing and regular turnover of intracellular proteins. Catalyzes the removal of unsubstituted N-terminal amino acids from various peptides. In Leifsonia xyli subsp. xyli (strain CTCB07), this protein is Probable cytosol aminopeptidase.